The chain runs to 208 residues: FMN-dependent NADH:quinone oxidoreductase 1 (208 aa).

Belongs to the azoreductase type 1 family. Homodimer. FMN is required as a cofactor.

It catalyses the reaction 2 a quinone + NADH + H(+) = 2 a 1,4-benzosemiquinone + NAD(+). It carries out the reaction N,N-dimethyl-1,4-phenylenediamine + anthranilate + 2 NAD(+) = 2-(4-dimethylaminophenyl)diazenylbenzoate + 2 NADH + 2 H(+). Quinone reductase that provides resistance to thiol-specific stress caused by electrophilic quinones. In terms of biological role, also exhibits azoreductase activity. Catalyzes the reductive cleavage of the azo bond in aromatic azo compounds to the corresponding amines. In Bacillus licheniformis (strain ATCC 14580 / DSM 13 / JCM 2505 / CCUG 7422 / NBRC 12200 / NCIMB 9375 / NCTC 10341 / NRRL NRS-1264 / Gibson 46), this protein is FMN-dependent NADH:quinone oxidoreductase 1.